A 126-amino-acid chain; its full sequence is Aspartate 1-decarboxylase (126 aa).

Serine 25 functions as the Schiff-base intermediate with substrate; via pyruvic acid in the catalytic mechanism. At serine 25 the chain carries Pyruvic acid (Ser). Threonine 57 provides a ligand contact to substrate. Residue tyrosine 58 is the Proton donor of the active site. Substrate is bound at residue 73–75 (GAA).

It belongs to the PanD family. As to quaternary structure, heterooctamer of four alpha and four beta subunits. The cofactor is pyruvate. Post-translationally, is synthesized initially as an inactive proenzyme, which is activated by self-cleavage at a specific serine bond to produce a beta-subunit with a hydroxyl group at its C-terminus and an alpha-subunit with a pyruvoyl group at its N-terminus.

Its subcellular location is the cytoplasm. It catalyses the reaction L-aspartate + H(+) = beta-alanine + CO2. The protein operates within cofactor biosynthesis; (R)-pantothenate biosynthesis; beta-alanine from L-aspartate: step 1/1. Functionally, catalyzes the pyruvoyl-dependent decarboxylation of aspartate to produce beta-alanine. The polypeptide is Aspartate 1-decarboxylase (Cellvibrio japonicus (strain Ueda107) (Pseudomonas fluorescens subsp. cellulosa)).